Here is a 408-residue protein sequence, read N- to C-terminus: E3 ubiquitin-protein ligase At1g12760 (408 aa).

The segment at 1–52 (MSTETTTGNSSLIPASSSSSSSDAIDPAPLLFNGDDNEGNNGGGGGERRSVR) is disordered. Low complexity predominate over residues 10–34 (SSLIPASSSSSSSDAIDPAPLLFNG). A run of 2 helical transmembrane segments spans residues 100-120 (VVVL…AILV) and 133-153 (VWLL…CVEY). A disordered region spans residues 160 to 195 (RTNRTTTTTPPRSRSSSSSSSSSSLEEEALGSRRNS). Low complexity predominate over residues 163 to 183 (RTTTTTPPRSRSSSSSSSSSS). 3 helical membrane passes run 219 to 239 (ANTM…SAGG), 254 to 274 (IVFL…ACVI), and 275 to 295 (GIAV…VADQ). Residues 353–394 (CCICLSAYEDGTELRELPCGHHFHCSCVDKWLYINATCPLCK) form an RING-type; atypical zinc finger.

The protein localises to the membrane. The catalysed reaction is S-ubiquitinyl-[E2 ubiquitin-conjugating enzyme]-L-cysteine + [acceptor protein]-L-lysine = [E2 ubiquitin-conjugating enzyme]-L-cysteine + N(6)-ubiquitinyl-[acceptor protein]-L-lysine.. Its pathway is protein modification; protein ubiquitination. Functionally, mediates E2-dependent protein ubiquitination in vitro. The chain is E3 ubiquitin-protein ligase At1g12760 from Arabidopsis thaliana (Mouse-ear cress).